Consider the following 482-residue polypeptide: ATP synthase subunit beta (482 aa).

Residue 168–175 coordinates ATP; it reads GGAGVGKT.

The protein belongs to the ATPase alpha/beta chains family. In terms of assembly, F-type ATPases have 2 components, CF(1) - the catalytic core - and CF(0) - the membrane proton channel. CF(1) has five subunits: alpha(3), beta(3), gamma(1), delta(1), epsilon(1). CF(0) has three main subunits: a(1), b(2) and c(9-12). The alpha and beta chains form an alternating ring which encloses part of the gamma chain. CF(1) is attached to CF(0) by a central stalk formed by the gamma and epsilon chains, while a peripheral stalk is formed by the delta and b chains.

Its subcellular location is the cell membrane. It catalyses the reaction ATP + H2O + 4 H(+)(in) = ADP + phosphate + 5 H(+)(out). In terms of biological role, produces ATP from ADP in the presence of a proton gradient across the membrane. The catalytic sites are hosted primarily by the beta subunits. This is ATP synthase subunit beta from Corynebacterium urealyticum (strain ATCC 43042 / DSM 7109).